The primary structure comprises 119 residues: Large ribosomal subunit protein uL22 (119 aa).

It belongs to the universal ribosomal protein uL22 family. As to quaternary structure, part of the 50S ribosomal subunit.

Its function is as follows. This protein binds specifically to 23S rRNA; its binding is stimulated by other ribosomal proteins, e.g. L4, L17, and L20. It is important during the early stages of 50S assembly. It makes multiple contacts with different domains of the 23S rRNA in the assembled 50S subunit and ribosome. The globular domain of the protein is located near the polypeptide exit tunnel on the outside of the subunit, while an extended beta-hairpin is found that lines the wall of the exit tunnel in the center of the 70S ribosome. The protein is Large ribosomal subunit protein uL22 of Chlorobium phaeovibrioides (strain DSM 265 / 1930) (Prosthecochloris vibrioformis (strain DSM 265)).